Reading from the N-terminus, the 200-residue chain is Molybdenum cofactor guanylyltransferase (200 aa).

Residues 15–17 (LAG), lysine 28, aspartate 74, and aspartate 104 each bind GTP. A Mg(2+)-binding site is contributed by aspartate 104.

This sequence belongs to the MobA family. Monomer. Mg(2+) serves as cofactor.

Its subcellular location is the cytoplasm. It catalyses the reaction Mo-molybdopterin + GTP + H(+) = Mo-molybdopterin guanine dinucleotide + diphosphate. In terms of biological role, transfers a GMP moiety from GTP to Mo-molybdopterin (Mo-MPT) cofactor (Moco or molybdenum cofactor) to form Mo-molybdopterin guanine dinucleotide (Mo-MGD) cofactor. The polypeptide is Molybdenum cofactor guanylyltransferase (Pseudomonas fluorescens (strain Pf0-1)).